The following is a 507-amino-acid chain: MKKIMIDGEQLTLQDIIHVTRNFYEIELSEDAKNRVRNNRKVVDRYVEEEKVVYGITTGFGKFSDVVISKSETEALQRNLIISHACGVGNPLEEDVVRGIMLLRANALSKGYSGIRLETLSTLIEMLNKGVHPVIPEKGSLGASGDLAPLSHMVLVLIGEGEAIYQGKRMSGREAMEAAGIRPVVLTSKEGLALINGTQVMTAIGALTVYDAINLSKISDIAAALTIEAQRGIVTAFDKRVHEVRPHAGQISCAENLNRLLEGSTYTTKQGEIKVQDAYTLRCIPQIHGASKDAIQYVENKINIEINSATDNPLIFSEDNDVISGGNFHGQPMALSFDFLGIALAEIANVSERRIERLVNPQLSGLPAFLTEKGGLNSGFMITQYSAAALVSENKVLAHPASVDSIPSSANQEDHVSMGTIAARKAREIYKNAVNVVAIELMAAAQGIDFYEGYTLGEGTQIAYDTIRNKVSKLQEDRVMYFDINQCANLIFSGELIEAVEKAVELQ.

Positions 143 to 145 (ASG) form a cross-link, 5-imidazolinone (Ala-Gly). Residue Ser-144 is modified to 2,3-didehydroalanine (Ser).

The protein belongs to the PAL/histidase family. Post-translationally, contains an active site 4-methylidene-imidazol-5-one (MIO), which is formed autocatalytically by cyclization and dehydration of residues Ala-Ser-Gly.

The protein localises to the cytoplasm. The enzyme catalyses L-histidine = trans-urocanate + NH4(+). It functions in the pathway amino-acid degradation; L-histidine degradation into L-glutamate; N-formimidoyl-L-glutamate from L-histidine: step 1/3. This Alkaliphilus oremlandii (strain OhILAs) (Clostridium oremlandii (strain OhILAs)) protein is Histidine ammonia-lyase.